A 282-amino-acid chain; its full sequence is Anamorsin homolog (282 aa).

The tract at residues 1–140 (MADLQGKAVL…KPVYEVGAAA (140 aa)) is N-terminal SAM-like domain. The linker stretch occupies residues 141–192 (PLKLSFAKKKQSGAAAPAAQVAEVWTIATDDFDDDDLLENDGDELLDAEDLA). C203, C214, C217, and C219 together coordinate [2Fe-2S] cluster. The interval 203–219 (CEVGAGGKRRACKNCTC) is fe-S binding site A. The [4Fe-4S] cluster site is built by C243, C246, C254, and C257. 2 short sequence motifs (cx2C motif) span residues 243–246 (CGNC) and 254–257 (CASC). Residues 243 to 257 (CGNCYLGDAFRCASC) are fe-S binding site B.

It belongs to the anamorsin family. Monomer. The cofactor is [2Fe-2S] cluster. Requires [4Fe-4S] cluster as cofactor.

The protein localises to the cytoplasm. Its subcellular location is the mitochondrion intermembrane space. Its function is as follows. Component of the cytosolic iron-sulfur (Fe-S) protein assembly (CIA) machinery. Required for the maturation of extramitochondrial Fe-S proteins. Part of an electron transfer chain functioning in an early step of cytosolic Fe-S biogenesis, facilitating the de novo assembly of a [4Fe-4S] cluster on the cytosolic Fe-S scaffold complex. Electrons are transferred from NADPH via a FAD- and FMN-containing diflavin oxidoreductase. Together with the diflavin oxidoreductase, also required for the assembly of the diferric tyrosyl radical cofactor of ribonucleotide reductase (RNR), probably by providing electrons for reduction during radical cofactor maturation in the catalytic small subunit. This Monosiga brevicollis (Choanoflagellate) protein is Anamorsin homolog.